The following is a 432-amino-acid chain: MTEISQILAREVLDSRGNPTVEAEVQLAGGARGRAAVPSGASTGEHEAIELRDGDKHRYLGKGVQKAVKNVVDVLAPALVGMDAADQFAVDQRMLELDGTATKGKLGANAILAVSMAAARAAADAHGLPLYRYVGGVQARTLPVPLMNILNGGAHADTRVDVQEFMVVPAGASSFAEGLRWGAEVFHALKKILKGRKLATGVGDEGGYAPDLPANEEALKLIMEAIDQAGFKAGEQLFLALDVAASEFFDKGSKKYKLKGEGKEYDSTGLLEYYRGLSERYPIISIEDGMAEDDWEGWKKLTDALGSRMQLVGDDLFVTNVERLGRGIETGTANSILVKVNQIGTLTETFDAVRMAHRAGYTSVMSHRSGETEDTTIADLAVALDCGQIKTGSASRSDRVAKYNQLLRIEGELGAAARYAGKSVFRALNQKK.

Q163 provides a ligand contact to (2R)-2-phosphoglycerate. Residue E205 is the Proton donor of the active site. Residues D242, E287, and D314 each coordinate Mg(2+). Residues K339, R368, S369, and K390 each coordinate (2R)-2-phosphoglycerate. K339 (proton acceptor) is an active-site residue.

It belongs to the enolase family. It depends on Mg(2+) as a cofactor.

It is found in the cytoplasm. It localises to the secreted. The protein resides in the cell surface. The catalysed reaction is (2R)-2-phosphoglycerate = phosphoenolpyruvate + H2O. It functions in the pathway carbohydrate degradation; glycolysis; pyruvate from D-glyceraldehyde 3-phosphate: step 4/5. Catalyzes the reversible conversion of 2-phosphoglycerate (2-PG) into phosphoenolpyruvate (PEP). It is essential for the degradation of carbohydrates via glycolysis. This Myxococcus xanthus (strain DK1622) protein is Enolase.